Reading from the N-terminus, the 180-residue chain is Large ribosomal subunit protein uL18m (180 aa).

It belongs to the universal ribosomal protein uL18 family. As to quaternary structure, component of the mitochondrial ribosome large subunit (39S) which comprises a 16S rRNA and about 50 distinct proteins.

It localises to the mitochondrion. Functionally, together with thiosulfate sulfurtransferase (TST), acts as a mitochondrial import factor for the cytosolic 5S rRNA. The precursor form shows RNA chaperone activity; is able to fold the 5S rRNA into an import-competent conformation that is recognized by rhodanese (TST). Both the cytoplasmic and mitochondrial forms are able to bind to the helix IV-loop D in the gamma domain of the 5S rRNA. The protein is Large ribosomal subunit protein uL18m (Mrpl18) of Mus musculus (Mouse).